The primary structure comprises 351 residues: MTWSATARGAHQPDNTAFTQQRLPAWQPLLSASIALPLFFCAGLAFIGLGLGLYYSSNGIKELEYDYTGDPGTGNCSVCAAAGQGRALPPPCSCAWYFSLPELFQGPVYLYYELTNFYQNNRRYGVSRDDAQLSGLPSALRHPVNECAPYQRSAAGLPIAPCGAIANSLFNDSFSLWHQRQPGGPYVEVPLDRSGIAWWTDYHVKFRNPPLVNGSLALAFQGTAPPPNWRRPVYELSPDPNNTGFINQDFVVWMRTAALPTFRKLYARIRQGNYSAGLPRGAYRVNITYNYPVRAFGGHKLLIFSSISWMGGKNPFLGIAYLVVGSLCILTGFVMLVVYIRYQDQDDDDEE.

Over 1-33 the chain is Cytoplasmic; sequence MTWSATARGAHQPDNTAFTQQRLPAWQPLLSAS. A helical membrane pass occupies residues 34–54; that stretch reads IALPLFFCAGLAFIGLGLGLY. The Exoplasmic loop segment spans residues 55–315; sequence YSSNGIKELE…SISWMGGKNP (261 aa). 3 N-linked (GlcNAc...) asparagine glycosylation sites follow: asparagine 75, asparagine 213, and asparagine 286. Residues 316–336 form a helical membrane-spanning segment; that stretch reads FLGIAYLVVGSLCILTGFVML. The Cytoplasmic segment spans residues 337-351; the sequence is VVYIRYQDQDDDDEE.

This sequence belongs to the CDC50/LEM3 family. Component of a P4-ATPase flippase complex which consists of a catalytic alpha subunit and an accessory beta subunit. Interacts with alpha subunits ATP8A1, ATP8B1, ATP8B2 and ATP8B4.

The protein resides in the cell membrane. Functionally, accessory component of a P4-ATPase flippase complex which catalyzes the hydrolysis of ATP coupled to the transport of aminophospholipids from the outer to the inner leaflet of various membranes and ensures the maintenance of asymmetric distribution of phospholipids. Phospholipid translocation also seems to be implicated in vesicle formation and in uptake of lipid signaling molecules. The beta subunit may assist in binding of the phospholipid substrate. Can mediate the export of alpha subunits ATP8A1, ATP8B1, ATP8B2 and ATP8B4 from the ER to the plasma membrane. This Homo sapiens (Human) protein is Cell cycle control protein 50B (TMEM30B).